The following is a 69-amino-acid chain: MSLGLIFALLLTHAAAAKEIGIKTVNDYIKQGESHWYTSYVTSHTFDVYLVWNNPSNSLTLTVYSPDGS.

Positions 1–16 (MSLGLIFALLLTHAAA) are cleaved as a signal peptide.

This is an uncharacterized protein from Archaeoglobus fulgidus (strain ATCC 49558 / DSM 4304 / JCM 9628 / NBRC 100126 / VC-16).